The following is a 681-amino-acid chain: Kojibiose hydrolase (681 aa).

Residues 1–23 (MKKYIFNHVFFFLMLCGSNYLYS) form the signal peptide. The beta-D-glucose site is built by Arg-74, Trp-343, Asp-344, Trp-391, Glu-392, Thr-407, Glu-472, Trp-473, Lys-538, Gln-539, and Asp-573. Residue Glu-472 is the Proton donor of the active site. The active-site Proton acceptor is the Glu-616.

The protein belongs to the glycosyl hydrolase 65 family. Homohexamer; dimer of trimers.

The protein resides in the periplasm. It carries out the reaction kojibiose + H2O = beta-D-glucose + D-glucose. Its function is as follows. Glycosidase that specifically hydrolyzes kojibiose to beta-glucose and glucose. Also hydrolyzes, with lower catalytic efficiency, longer kojioligosaccharides (from kojitriose to kojipentaose) and shorter oligosaccharides produced by the degradation of dextran-containing alpha-1,2 branches. Probably acts on alpha-(1-&gt;2)-glucosyl isomaltooligosaccharides. Shows weak activity with nigerose but has no activity toward p-nitrophenyl alpha-glucopyranoside, which is a general substrate of exo-acting alpha-glucoside hydrolases. Has a strict specificity for alpha-1,2-glucosidic linkages. Catalyzes the hydrolytic reaction via an anomer-inverting mechanism. This is Kojibiose hydrolase from Flavobacterium johnsoniae (strain ATCC 17061 / DSM 2064 / JCM 8514 / BCRC 14874 / CCUG 350202 / NBRC 14942 / NCIMB 11054 / UW101) (Cytophaga johnsonae).